The primary structure comprises 3326 residues: MAADTLMVTGAWLSNSGTLQGRQSVGLAVGRDFSQTADGVLTSGGTVTVTAGGVATAGALTAQGLALTAGRWRHQGAVTLGGDGRLVLDELDNGGTLRAGGAWDMQAAALSNGGTLQGGRLALTLSGAAVNRGTLAGERVTLTADSLDNGGTLLGMDALTLAIAGTARNQASGQWLSQGESRLTAGTLDNQGQWQGDSLSVTADRIRNAGQLLGLSALTLTADGTLTNTATGTLLTQGAAVLRAATVDNDGEWQAGRLRLTADSLRNGGRIQSDGALDVALSPAGVLTNTGTLAANGDTTLTPGGLDNRGAVSVRGDLTVTGTDLDNAGQLAARGALTLTGSYAGAGSLYSDAALTLRGTTLANDGGRWQGQTVDIGGGPLTNDGNITGLDSLTVTTTGALTNRGRLAGQTLGITADALDNAGTLLGVDALTLAIAGTARNQTSGQWLSNGAGRLTAGTLDNRGQWQGDSLDATADRLDNAGTLLGLSAMTLTVNGALTNTGRLLTQGAAVLSAATADNDGEWQTGSLWLTADSLRNGGQIHSDGEVRITLPTADGDPLRPTLRAARQLAQDVEAIGAGRLSNTGVLTAGGDGRITGRGLDNAGTLAAGGALTLAAGDLTNAGRLESRTLSLTGDSLDNGGTLLAEQGGELTLGGGLHVGADGRLLSNGDWQVQAGTVTSLGQWQGKTLLLSAASLDNGGALLATDAVTLTLTQGYTGGAGSQVLGSGAVTLTADTVTQQGDIGGDRLALTTGTLTNGGRLVGLSQLDVTSRGQLTNRATGSLLGNGTAGVTAATLDNAGSVQADTLTLTADTVTNAGRMQGTSALTLNGVSRYTGTDGSQLLSGGTATLAIDNADNAGLWQAGELRFRGASLTSRGQITGLDSLTVDAASLTSTGQLTTRGLATLRGQRFDNGGTLTALGGFTARFSDSVTNQGGGQLLSGGTGSLTTGTLVNRGRWQSDRLTLTADTLRNPGTLLGLDDGNIQLTGAYVGEAGSQVGGNGALSLSAATIDQAGQWQARDVTLRATRLRNQGSITGSGQLTATLDEQLENLAGATLLGGTVWLGGATVSNGGQIQGRSGLTVQGGTLLDNQGGGQLLSGGQLALGATQLTNAGWVQGQDLTLTTAQLDNSGTLQAQSGLTLHLPQWTNRGTVQAGQLDITTDGALDNRGTLLGLTRLALQAASLNNADGARLYSAGGLQLRTGQLTQDGQLAALGDLRADIGTPFTFTRTLAAGGQLTLAVTGDLVQAGTLQGHGVTVTSTGTLTQQGRIVAGGGNSTLSAAAISQTESGSIQGGGPLSLRATGNIVNRGFVGTAGDLLVQAGGVMENGSLLYGGGNLQLLSAALVNRFGNILAGGSLWIQRDAAGNASDSVLNSSGTIETQRGDITVRTGTLTNQREGLVVTESGSTAADMPDWVGGTTIYIPVERFEVIKDYLVYSFEHTPGAGSDSPTTYNYFYPFPLSHVSKQEFSASSKIVNIESKGGSSLIHSAGDINIFSSVLVNDASIIASEKNILMNGGVLKNSSYQSGVMSESLIYEYERDDKDDFLPYIEWLWEKTKREEGVSDYDYWEYLSGYNIHAYNRNILTNDRFKYVLKDRQIIFTPGQTYAATIQAGGAITANFSQNISNTNLQPGSGGFMPAMATPTLAGVNALGPVGAQADRGLNGGTAGNVSGSTLSGAGNGVALAGQAGRLNAGYSAVTRDNTASSGSALNPVGIPAGPGTAGGAPVAGASLTPVAPGALALSDLQAALAQGLQQLGSPSLTDYPLPTSQSGLFVADTAGDSRYLIRTNPTLSQLGQVDNALFGDLRGLLGQTPGTTAPVERSPTLTDPTQVLGSSYLLGKLNLDAEHDYRFLGDAAFDTRYISNAVLSQTGQRYLNGVGSELAQMQQLMDNAAAEKSRLNLQLGVSLTPEQVAGLSHSLVWWENITVGGQTVLAPKLYLAQADKTNLQGSRIVANSVSLSAGGDIDNRGSTVTAQDALAVASGGNLTNSEGGLLNAGGALNLVALGNLTNSSATIQGNTVTLASVGGDIVNTTTTDQWQTAARDGRGRGSLTRTDIGQAGLISAQGGLTLQAGHDIALNGAQLSAGGPLQLAAGNDIRLTALSTVTDTVRQDGGATTERRGQGLVQSTVASGGDLSLSAGRDLSGTAAQLSAAGTLALSAGRDLSLLSASEEQFSSNAWKRHLDWQQTVTQQGTVLNAGEGLSLRAGQDLTLQGAQAETRGALTAQAGRDLSLLSATESRHDFFEETTVKKGFLSKTTTHTLRETQQTTEKGTLLSAGSVALTAGHDIGVQGSAVAADGEVTLTAGNDITTAASVETYRNYEEQSRKKSGVFSGGGIGFTIGSTSLRQTLESAGTTQSQSVSTLGSTGGSVRLNAGQAVSMAATDVIAARDIQVTGNSVTIDPGYDTRKQSRQMEQKTAGLTVTLSGVVGSALNSAVQTVQAVREQSDSRLQALQGMKAALSGYQAYQGTQIDTNNQGASSFVGISVSLGAQRSSSSQTSEQSQSFASTLNAGHDISVVARQGDITAVGSQLKAANNVELNASRAINLLSARNTESMTGSNSSSGGNIGVSFGLSNSGAGFSVFANVNAAKGRELGNGNSWSETTVDAGQQIALTSGGDTRLTGAQVSGERIVANVGGDLLLKSQQDSNRYDSKQTSVSAGGSFTFGSMTGSGYLSASQDKMHSSFDSVQQQTGLFAGKGGYDISVGNHTQLDGAVIGSTAGADKNRLDTGTLGFSNIDNRAEFSVSHSGIGLSASPSLSMSDMLKSAALTAPSALMSMGRGGNAGSTTYAAVSDGALIIRNQAGQQQDIAGLSREVEHANNALSPIFDKEKEQKRLQTAQMVGELGAQVMDVIRTEGEIRAVRAAEAKGDVKRPPDNASEKDWDKYKKDLTETPAYKAVMQSYGTGSDLQRATQAATAAIQALAGGGNLQQALAGASAPYLAQLVKGVTMPADESKATASDIAANAMGHALMGAVVAQLSGKDAVAGAVGAAGGELTARLLIMKELYSGRDTSDLTEAEKQSVSALASLAAGLASGIASGNTTGAATGAQAGRNAVENNSLGDIAQAQSEGKTLEQNAGEYVEAENERYKKENCAGLSAEACSVKMYEERREELKETLSTGADFVPVIGDIKSFAEAQSALDYLAAAVGLIPGAGDAAGKAIKAAETALKKGELAEASKLINKASDEIQAVKPLDVGSYKELKDRAVVGDGLEHDHIPSFAALRTAKENELGRKLTPAEEKTLYQNATAVEVPKDVHRAGPTYGGKNTAAQVQQDALDLCGAVCRDTDALRTNMIERGYEPALVDDAVKKIIDRNRQIGVIK.

The segment at 36 to 342 is two-partner system transport domain (TPS); sequence TADGVLTSGG…ARGALTLTGS (307 aa). Residues 343–1396 are FHA-1; it reads YAGAGSLYSD…ITVRTGTLTN (1054 aa). The tract at residues 1397–1765 is receptor binding domain (RBD); that stretch reads QREGLVVTES…QQLGSPSLTD (369 aa). The YP domain stretch occupies residues 1766 to 1951; that stretch reads YPLPTSQSGL…LAQADKTNLQ (186 aa). The periplasmic FHA-1 repeat (pFR) stretch occupies residues 1959 to 2097; it reads SVSLSAGGDI…AGGPLQLAAG (139 aa). The tract at residues 2125–2660 is FHA-2; the sequence is QGLVQSTVAS…SNRYDSKQTS (536 aa). Residues 3060-3063 carry the VENN CT cleavage motif motif; it reads VENN. The segment at 3060–3326 is CT domain; the sequence is VENNSLGDIA…DRNRQIGVIK (267 aa).

It in the N-terminal section; belongs to the CdiA toxin family. In terms of assembly, the C-terminal (CT) domain interacts with cognate CdiI but not non-cognate CdiI from E.coli strain 536 / UPEC.

It localises to the target cell. It is found in the target cell cytoplasm. In terms of biological role, toxic component of a toxin-immunity protein module, which functions as a cellular contact-dependent growth inhibition (CDI) system. CDI modules allow bacteria to communicate with and inhibit the growth of closely related neighboring bacteria in a contact-dependent fashion. CDI is neutralized by its cognate immunity protein CdiI, but not by non-cognate CdiI from other bacteria. The C-terminal domain (CT) has strong DNase activity; this activity is inhibited by cognate CdiI. Functionally, the CdiA protein is thought to be exported from the cell through the central lumen of CdiB, the other half of its two-partner system (TPS). The TPS domain probably remains associated with CdiB while the FHA-1 domain forms an extended filament with the receptor-binding domain (RBD) at its extremity; in the secretion arrested state the C-terminus of the RBD and YP domains form a hairpin-like structure as the FHA-2, PT and CT domains are periplasmic. The YP domain is probably responsible for this arrest at the point where it re-enters the host cell periplasm. Upon binding to a target cell outer membrane receptor a signal is transmitted to activate secretion. The filament elongates slightly, the rest of CdiA is secreted and the FHA-2 domain becomes stably associated with the target cell's outer membrane where it facilitates entry of the toxic CT domain into the target cell periplasm. From there the toxic CT domain is cleaved and gains access to the target cell cytoplasm via an inner membrane protein. The sequence is that of Deoxyribonuclease CdiA from Dickeya dadantii (strain 3937) (Erwinia chrysanthemi (strain 3937)).